Here is a 432-residue protein sequence, read N- to C-terminus: MQVTVETLEGLERRLNITVPAANIEDAVTAELRNIAKNRRFDGFRKGKVPMKMVAKMYGKAVRQDILGEVMQRHFIEAIIKEKINPAGAPTFAPVENKEGSDLVFNATFEVYPEVELKGLENITVEKPAVEVKDADVEEMIETLRKQQATWTEVEEAAEAGKRVSIDFVGSIDGEEFEGGKAENFPLEMGAGRMIPGFEDGIEGKTKGMEFEIDVTFPEDYHAENLKGKAAKFAIKVNKVEARQLPELNDEFVAKFGVAEGGIDALKAEVRKNMERELKQAVKNRIKEQAIDGLVKENEIDVPAALIDQEINVLRQQAAQRFGGNVEAAMQLPRELFEEQAKRRVVVGLLLGEVIKAHELKVDEEKVKAIITEMATAYEDPTEVVTYYEQNEQLMNNMRNVALEEQAIDAIIAKAQVSEKEVSFNELMNQPA.

Residues Gly-161–Pro-246 enclose the PPIase FKBP-type domain.

Belongs to the FKBP-type PPIase family. Tig subfamily.

The protein resides in the cytoplasm. It carries out the reaction [protein]-peptidylproline (omega=180) = [protein]-peptidylproline (omega=0). In terms of biological role, involved in protein export. Acts as a chaperone by maintaining the newly synthesized protein in an open conformation. Functions as a peptidyl-prolyl cis-trans isomerase. The sequence is that of Trigger factor from Vibrio vulnificus (strain CMCP6).